Here is a 714-residue protein sequence, read N- to C-terminus: Fatty acid oxidation complex subunit alpha (714 aa).

The segment at 1–190 (MEMASAFTLN…KLGLVDDVVP (190 aa)) is enoyl-CoA hydratase. The 3-hydroxyacyl-CoA dehydrogenase stretch occupies residues 306–714 (APLNSVGILG…FWKTTATDLQ (409 aa)).

It in the N-terminal section; belongs to the enoyl-CoA hydratase/isomerase family. In the central section; belongs to the 3-hydroxyacyl-CoA dehydrogenase family. In terms of assembly, heterotetramer of two alpha chains (FadJ) and two beta chains (FadI).

Its subcellular location is the cytoplasm. It carries out the reaction a (3S)-3-hydroxyacyl-CoA = a (2E)-enoyl-CoA + H2O. It catalyses the reaction a 4-saturated-(3S)-3-hydroxyacyl-CoA = a (3E)-enoyl-CoA + H2O. The catalysed reaction is a (3S)-3-hydroxyacyl-CoA + NAD(+) = a 3-oxoacyl-CoA + NADH + H(+). The enzyme catalyses (3S)-3-hydroxybutanoyl-CoA = (3R)-3-hydroxybutanoyl-CoA. The protein operates within lipid metabolism; fatty acid beta-oxidation. In terms of biological role, catalyzes the formation of a hydroxyacyl-CoA by addition of water on enoyl-CoA. Also exhibits 3-hydroxyacyl-CoA epimerase and 3-hydroxyacyl-CoA dehydrogenase activities. In Shigella boydii serotype 4 (strain Sb227), this protein is Fatty acid oxidation complex subunit alpha.